A 352-amino-acid chain; its full sequence is DNA integrity scanning protein DisA (352 aa).

The DAC domain occupies 3–143 (PQELIEKIKL…NYKYVVNQVD (141 aa)). Residues Gly-71, Leu-89, and 102–106 (TRHRT) each bind ATP.

This sequence belongs to the DisA family. Homooctamer. It depends on Mg(2+) as a cofactor.

The enzyme catalyses 2 ATP = 3',3'-c-di-AMP + 2 diphosphate. Functionally, participates in a DNA-damage check-point. DisA forms globular foci that rapidly scan along the chromosomes searching for lesions. Also has diadenylate cyclase activity, catalyzing the condensation of 2 ATP molecules into cyclic di-AMP (c-di-AMP). c-di-AMP likely acts as a signaling molecule that may couple DNA integrity with a cellular process. This Thermotoga petrophila (strain ATCC BAA-488 / DSM 13995 / JCM 10881 / RKU-1) protein is DNA integrity scanning protein DisA.